We begin with the raw amino-acid sequence, 301 residues long: Nucleotide-binding protein Mb1456 (301 aa).

24–31 (GLSGAGRG) provides a ligand contact to ATP. 75–78 (DVRS) lines the GTP pocket.

It belongs to the RapZ-like family.

Displays ATPase and GTPase activities. The polypeptide is Nucleotide-binding protein Mb1456 (Mycobacterium bovis (strain ATCC BAA-935 / AF2122/97)).